The chain runs to 1191 residues: Protogenin (1191 aa).

Residues 1 to 23 (MAPPVRPGMLPLLLLLLLPPLGS) form the signal peptide. Ig-like domains lie at 24–124 (VPGV…AHLT), 126–216 (STIS…ASLT), 229–316 (PTII…ATLT), and 321–405 (PSFV…ARLT). The Extracellular portion of the chain corresponds to 24-943 (VPGVWSFSEL…YYHLDQKSMT (920 aa)). Intrachain disulfides connect Cys54–Cys107 and Cys150–Cys199. The N-linked (GlcNAc...) asparagine glycan is linked to Asn237. 2 cysteine pairs are disulfide-bonded: Cys250–Cys298 and Cys342–Cys389. 5 Fibronectin type-III domains span residues 415-509 (APYN…TLED), 511-607 (PLRP…TPKA), 612-711 (APKS…VRDR), 718-811 (PPHH…TLPE), and 816-911 (PPVG…VLPK). A glycan (N-linked (GlcNAc...) asparagine) is linked at Asn624. A helical membrane pass occupies residues 944 to 964 (GIAVGVGIALTCILICVLILI). Over 965–1191 (YRSKARKSSA…LRYAAEGFPV (227 aa)) the chain is Cytoplasmic. Disordered regions lie at residues 975 to 1010 (SKTA…ETAE) and 1079 to 1191 (ISDE…GFPV). Over residues 977 to 990 (TAQSGTQPLSQASA) the composition is skewed to polar residues. Over residues 1104-1132 (DTEHSANSEGSHETGDSGRFSHESNDEIH) the composition is skewed to basic and acidic residues. Composition is skewed to polar residues over residues 1135–1146 (SVISSTPPTSNP) and 1171–1180 (EQTSAPQTSA).

The protein belongs to the immunoglobulin superfamily. DCC family. As to expression, from mid-gastrulation to early somite stages, restricted to posterior neural plate and mesoderm with an anterior limit at the level of the rhombencephalon. Posterior restriction is progressively lost during somitogenesis. Expression is maintained in the neural tube and paraxial mesoderm during this process. As development proceeds, further restricted to the dorsal parts of the spinal cord and somites. In parallel, expression progresses caudally during axis elongation.

It localises to the membrane. May play a role in anteroposterior axis elongation. The sequence is that of Protogenin from Mus musculus (Mouse).